The primary structure comprises 450 residues: Vimentin beta (450 aa).

The head stretch occupies residues 1–81; the sequence is MSSRTSTSSY…FGLADAINTE (81 aa). The segment covering 24 to 38 has biased composition (polar residues); it reads STYSSRQYSSPGRTT. The segment at 24 to 56 is disordered; it reads STYSSRQYSSPGRTTSRVSYSSASSTSPSLYMS. A compositionally biased stretch (low complexity) spans 39–56; the sequence is SRVSYSSASSTSPSLYMS. Residues 82 to 117 form a coil 1A region; sequence FKANRTNEKAEMQHVNDRFASYIEEVRFLEQQNKIL. Residues 89-397 form the IF rod domain; the sequence is EKAEMQHVND…NLLEGEEYRI (309 aa). The interval 118–139 is linker 1; sequence TAELEQMRGKGSSRVGDLYEDE. The tract at residues 140–231 is coil 1B; the sequence is MRELRRQVDQ…KLHDEELAEL (92 aa). The tract at residues 232–254 is linker 12; that stretch reads QMQIQERHVQIDMEVAKPDLTAA. A coil 2 region spans residues 255–393; that stretch reads LRDVRQQYET…ATYRNLLEGE (139 aa). A tail region spans residues 394 to 450; sequence EYRITTPFPNLSSLSLRESMKEIRPAMDSLSKKVVIKTIETRDGHIINQSTQKDNLE.

The protein belongs to the intermediate filament family. As to quaternary structure, homomer. One of the most prominent phosphoproteins in various cells of mesenchymal origin. Phosphorylation is enhanced during cell division, at which time vimentin filaments are significantly reorganized. As to expression, expressed in low amounts in retina, optic nerve, brain, and spinal cord and in very high amounts in eye lens.

In terms of biological role, vimentins are class-III intermediate filaments found in various non-epithelial cells, especially mesenchymal cells. Vimentin is attached to the nucleus, endoplasmic reticulum, and mitochondria, either laterally or terminally. In Carassius auratus (Goldfish), this protein is Vimentin beta.